The following is a 211-amino-acid chain: MAPSRNGMILKPHFHKDWQRRVATWFNQPARKIRRRKARQARARRIAPRPAAGPIRPIVRCPTVRYHTKVRAGHGFSLEELRVAGIHKKVARTIGISVDPRRRNKSTESLQANVQRLKEYRSKLVLFPRKPSAPKKGDSSAEELKLATQLTGPVMPIRNVFKKEKARVITEEEKNFKAFASLRMARANAHLFGIRAKRAKEAAEQDVEKKK.

Position 16 is an N6-acetyllysine (Lys16). 2 positions are modified to phosphoserine: Ser77 and Ser106. Residues Lys123 and Lys145 each participate in a glycyl lysine isopeptide (Lys-Gly) (interchain with G-Cter in SUMO2) cross-link. Residue Lys174 forms a Glycyl lysine isopeptide (Lys-Gly) (interchain with G-Cter in SUMO1); alternate linkage. Residues Lys174 and Lys177 each participate in a glycyl lysine isopeptide (Lys-Gly) (interchain with G-Cter in SUMO2); alternate cross-link. Lys177 carries the N6-acetyllysine; alternate modification.

Belongs to the eukaryotic ribosomal protein eL13 family. As to quaternary structure, component of the 60S large ribosomal subunit (LSU).

The protein resides in the cytoplasm. In terms of biological role, component of the ribosome, a large ribonucleoprotein complex responsible for the synthesis of proteins in the cell. The small ribosomal subunit (SSU) binds messenger RNAs (mRNAs) and translates the encoded message by selecting cognate aminoacyl-transfer RNA (tRNA) molecules. The large subunit (LSU) contains the ribosomal catalytic site termed the peptidyl transferase center (PTC), which catalyzes the formation of peptide bonds, thereby polymerizing the amino acids delivered by tRNAs into a polypeptide chain. The nascent polypeptides leave the ribosome through a tunnel in the LSU and interact with protein factors that function in enzymatic processing, targeting, and the membrane insertion of nascent chains at the exit of the ribosomal tunnel. As part of the LSU, it is probably required for its formation and the maturation of rRNAs. Plays a role in bone development. The chain is Large ribosomal subunit protein eL13 (RPL13) from Oryctolagus cuniculus (Rabbit).